Reading from the N-terminus, the 72-residue chain is Small proline-rich protein 2E (72 aa).

Low complexity predominate over residues 1-11 (MSYQQQQCKQP). A disordered region spans residues 1–20 (MSYQQQQCKQPCQPPPVCPT). 3 tandem repeats follow at residues 21 to 29 (PKCPEPCPP), 30 to 38 (PKCPEPCPP), and 39 to 47 (PKCPQPCPP). A 3 X 9 AA tandem repeats of P-K-C-P-[EQ]-P-C-P-P region spans residues 21–47 (PKCPEPCPPPKCPEPCPPPKCPQPCPP). The tract at residues 42–72 (PQPCPPQQCQQKCPPVTPSPPCQPKCPPKSK) is disordered. Residues 56–72 (PVTPSPPCQPKCPPKSK) are compositionally biased toward pro residues.

This sequence belongs to the cornifin (SPRR) family.

Its subcellular location is the cytoplasm. Cross-linked envelope protein of keratinocytes. It is a keratinocyte protein that first appears in the cell cytosol, but ultimately becomes cross-linked to membrane proteins by transglutaminase. All that results in the formation of an insoluble envelope beneath the plasma membrane. In Homo sapiens (Human), this protein is Small proline-rich protein 2E (SPRR2E).